We begin with the raw amino-acid sequence, 104 residues long: MNRDQEKIQIENEMNAMHGTIKEDILKDFEEFKGYLKKQVNRGKKLGLDDGKLVKSAAILGDYLAKHEEPQNGEEMLLQELWSVADEDEKEHLAQLLVKLVDKQ.

This is an uncharacterized protein from Bacillus subtilis (strain 168).